The chain runs to 1021 residues: MDVTGAPYSSGLNVRNVLLTESTSTFTPIETYNVQDDIRTIRISAKIAEESVVSRVPLPVSFKPISEITKLFDIIPISRGSTTSIVEHPQTSFMIKLRDNTFSDYACLDHLVAFEPALILHRLKMLFSILGKYASSIISEVPTLDVMIDNAQVTVIDMSKFDDRNMNTYADRLPRDIEVYAAKQDILKQYVRTSVNETPITFRDDLPMPVRERPTLYRRYIVPFTPVELSLYNMALQMLDLQYCHPLIVYKYLQDRAPPFLVVNDQIGLEMLSAGDGELLPRPVMEVLDYSLVYSSPLALNNLGSLLMSRIKTSIKVRSINEVSSSLSEIVNASSTVSNSASSAIANMNVAGVETIAAFIIRSVLNPNISYAMIGKLDLDAFNDFIYGTCLLLLQAITPPSAIAAMSRVRINNALAYFLLRYICPQPVYTRLLQNDVIPSLTNTLEWSSVDRDILAAIYSNLFVADGRIWNLVSRYYRELPPEEVTQVSVPARETSYGINETRGISLPYLFGDAITEMRPDNRLNDYKQRLNLPSRSPILIANPMRNNVVDLTNVNVKMDFIMDLYDQNNFLKSPAQWVRNSASNSALLAKFRDSVSNITGILENVLSNAYSNAVNTYCDSVYRAGVPLNWKYRVVIDPKDMMFVIFGVCPRYVLMGDSIPDFFAGSEDILILQLVRAIWEVMSNHMGNVPTRFFRMEDVQRDLSEMVSIVLSKKIDVTKYFTDDMRSTTFSKEAWERFIARQIGEELPPLYRTILDQVETINNYMEQMMSIMPIVDHFYVVRNSGIAARGSVNPILAATTLNLNQINTTMIIRDWSELVRLVMTQQRVDLNTSHSLFEAEFYKLSEIASNEFVRSNERGEAEPHFTDVEAIRINMYARYELKIYKEQGEFSKPTKLNKVMHEDLTSFVKSNIGKPYPPVFTIPIDIMLNDLGECTSTKTRMRSFKVDEYFKCFTGAQVIIPLDYVNLEHVGSIQDLQVMFNGSVSVRIKPWTIKENFDVNYVQTGNHEVLIDPLPNVLPI.

Belongs to the phytoreovirus inner capsid protein P3 family. In terms of assembly, homodimer. Homomultimer.

The protein resides in the virion. Its subcellular location is the host cytoplasm. Functionally, capsid protein which self-assembles to form the inner icosahedral capsid with a T=2 symmetry, and consisting of 60 P3 dimers. This is Outer capsid protein P3 from Nephotettix cincticeps (Green rice leafhopper).